Reading from the N-terminus, the 344-residue chain is Bifunctional trans-3-hydroxy-L-proline dehydratase/2-epimerase (344 aa).

Residue serine 90 is the Proton acceptor of the active site. Residues 91-92, aspartate 252, and 257-258 each bind substrate; these read GS and GT.

The protein belongs to the proline racemase family.

The enzyme catalyses trans-3-hydroxy-L-proline = 1-pyrroline-2-carboxylate + H2O. It catalyses the reaction trans-3-hydroxy-L-proline = cis-3-hydroxy-D-proline. Functionally, bifunctional enzyme catalyzing both the dehydration of trans-3-hydroxy-L-proline (t3LHyp) to Delta(1)-pyrroline-2-carboxylate (Pyr2C) and 2-epimerization of t3LHyp to cis-3-hydroxy-D-proline (c3DHyp). No dehydratase activity with L-proline, trans-4-hydroxy-L-proline (t4LHyp), cis-4-hydroxy-L-proline (c4LHyp), D-proline, cis-4-hydroxy-D-proline (c4DHyp), trans-4-hydroxy-D-proline (t4DHyp) or L-serine as substrates. Displays neither t4LHyp epimerase nor proline racemase activity. Is likely involved in a degradation pathway that converts t3LHyp to L-proline, which would allow P.aeruginosa to grow on t3LHyp as a sole carbon source. The chain is Bifunctional trans-3-hydroxy-L-proline dehydratase/2-epimerase from Pseudomonas aeruginosa (strain ATCC 15692 / DSM 22644 / CIP 104116 / JCM 14847 / LMG 12228 / 1C / PRS 101 / PAO1).